We begin with the raw amino-acid sequence, 379 residues long: Succinyl-diaminopimelate desuccinylase (379 aa).

H70 lines the Zn(2+) pocket. D72 is an active-site residue. D103 lines the Zn(2+) pocket. Catalysis depends on E137, which acts as the Proton acceptor. Residues E138, E166, and H352 each coordinate Zn(2+).

It belongs to the peptidase M20A family. DapE subfamily. In terms of assembly, homodimer. Zn(2+) is required as a cofactor. The cofactor is Co(2+).

The enzyme catalyses N-succinyl-(2S,6S)-2,6-diaminopimelate + H2O = (2S,6S)-2,6-diaminopimelate + succinate. Its pathway is amino-acid biosynthesis; L-lysine biosynthesis via DAP pathway; LL-2,6-diaminopimelate from (S)-tetrahydrodipicolinate (succinylase route): step 3/3. In terms of biological role, catalyzes the hydrolysis of N-succinyl-L,L-diaminopimelic acid (SDAP), forming succinate and LL-2,6-diaminopimelate (DAP), an intermediate involved in the bacterial biosynthesis of lysine and meso-diaminopimelic acid, an essential component of bacterial cell walls. The chain is Succinyl-diaminopimelate desuccinylase from Burkholderia lata (strain ATCC 17760 / DSM 23089 / LMG 22485 / NCIMB 9086 / R18194 / 383).